The chain runs to 74 residues: Large ribosomal subunit protein uL29 (74 aa).

Belongs to the universal ribosomal protein uL29 family.

The chain is Large ribosomal subunit protein uL29 from Cyanothece sp. (strain PCC 7425 / ATCC 29141).